A 183-amino-acid polypeptide reads, in one-letter code: Ribosome maturation factor RimP (183 aa).

It belongs to the RimP family.

The protein resides in the cytoplasm. Functionally, required for maturation of 30S ribosomal subunits. In Leptothrix cholodnii (strain ATCC 51168 / LMG 8142 / SP-6) (Leptothrix discophora (strain SP-6)), this protein is Ribosome maturation factor RimP.